Reading from the N-terminus, the 233-residue chain is Small ribosomal subunit protein uS2c (233 aa).

The protein belongs to the universal ribosomal protein uS2 family.

The protein resides in the plastid. It is found in the apicoplast. This chain is Small ribosomal subunit protein uS2c, found in Toxoplasma gondii.